A 944-amino-acid polypeptide reads, in one-letter code: Translation initiation factor IF-2 (944 aa).

The span at 55 to 81 (LTGQAAAPAAAPSSAPRPGARSSAPKP) shows a compositional bias: low complexity. Residues 55-329 (LTGQAAAPAA…RTKRAEFELR (275 aa)) form a disordered region. Residues 82–92 (GGRPTPGPQPT) show a composition bias toward pro residues. Over residues 93–107 (AAPEVEAPEASDVPV) the composition is skewed to low complexity. The span at 123 to 135 (ASRKAAAEEKAQA) shows a compositional bias: basic and acidic residues. 2 stretches are compositionally biased toward low complexity: residues 136 to 153 (EKSA…ETPS) and 211 to 222 (GQRPAAGAAGPR). A compositionally biased stretch (pro residues) spans 223–236 (PAAPRPGSPRPGAP). Residues 244-257 (GARPAGFGQRPAGA) are compositionally biased toward low complexity. The span at 258–269 (GRPGGAPGGAGR) shows a compositional bias: gly residues. Residues 270–283 (PGAPAAGGFQRPAG) are compositionally biased toward low complexity. Residues 284-310 (GFAGRPGGGGRGRGPGGGTAGAFGRGG) are compositionally biased toward gly residues. The segment covering 311 to 322 (GKSKSRKSKRTK) has biased composition (basic residues). The tr-type G domain maps to 437-611 (IRPPVVTVMG…LTADAGLDLR (175 aa)). A G1 region spans residues 446 to 453 (GHVDHGKT). 446-453 (GHVDHGKT) is a GTP binding site. The G2 stretch occupies residues 471-475 (GITQH). The G3 stretch occupies residues 496–499 (DTPG). GTP-binding positions include 496–500 (DTPGH) and 550–553 (NKVD). Residues 550-553 (NKVD) are G4. Residues 586–588 (SAL) are G5.

Belongs to the TRAFAC class translation factor GTPase superfamily. Classic translation factor GTPase family. IF-2 subfamily.

It localises to the cytoplasm. In terms of biological role, one of the essential components for the initiation of protein synthesis. Protects formylmethionyl-tRNA from spontaneous hydrolysis and promotes its binding to the 30S ribosomal subunits. Also involved in the hydrolysis of GTP during the formation of the 70S ribosomal complex. In Clavibacter michiganensis subsp. michiganensis (strain NCPPB 382), this protein is Translation initiation factor IF-2.